The sequence spans 145 residues: AP-2 complex subunit sigma (145 aa).

The protein belongs to the adaptor complexes small subunit family. In terms of assembly, adaptor protein complex 2 (AP-2) is a heterotetramer composed of two large adaptins (alpha-type subunit apl3 and beta-type subunit apl1), a medium chain (mu-type subunit apm4) and a small adaptin (sigma-type subunit aps2).

The protein resides in the cell membrane. Its subcellular location is the membrane. It localises to the coated pit. Its function is as follows. Component of the adaptor complexes which link clathrin to receptors in coated vesicles. Clathrin-associated protein complexes are believed to interact with the cytoplasmic tails of membrane proteins, leading to their selection and concentration. In Emericella nidulans (strain FGSC A4 / ATCC 38163 / CBS 112.46 / NRRL 194 / M139) (Aspergillus nidulans), this protein is AP-2 complex subunit sigma (aps2).